The sequence spans 299 residues: Probable lipid kinase YegS (299 aa).

Residues 2–133 form the DAGKc domain; that stretch reads ANFPASLLIL…IDMARVNDKT (132 aa). ATP-binding positions include Thr-40, 66 to 72, and Thr-95; that span reads GDGTINE. Leu-215, Asp-218, and Leu-220 together coordinate Mg(2+). Catalysis depends on Glu-271, which acts as the Proton acceptor.

It belongs to the diacylglycerol/lipid kinase family. YegS lipid kinase subfamily. The cofactor is Mg(2+). It depends on Ca(2+) as a cofactor.

The protein localises to the cytoplasm. In terms of biological role, probably phosphorylates lipids; the in vivo substrate is unknown. This is Probable lipid kinase YegS from Salmonella paratyphi A (strain ATCC 9150 / SARB42).